Consider the following 749-residue polypeptide: MEVVPAEVNSLLPDDIMDTAITLVDEDSIEAVIVSSPIPMETELEEIVSINSTGDSTATPISTEPITVYSNHTNQVAVNTTVSKADSNTTVKPAFPSGLQKLGAQTPVTISANQIILNKVSQTSDLKLGNQTLKPDGQKLILTTLGKSGSPIVLALPHSQLPQAQKVTAQAQPGDAKLPPQQIKVVTIGGRPEVKPAIGVSALTPGSQLINTTTQPSVLQTQQLKTVQIAKKPRTPTSGPVITKLIFAKPINSKAVTGQTTQASPPVVTGRVLSQSAPGTPSKTITISESGVIGSTLNSTTQTPNKIAISPLKSPNKTVKSAVQTITVGGMSTSQFKTIIPLAAAPNVQPIQVPGSKFHYVRLVTATTAGSSAPPVSQSPSVNTQPLQQAKPVVVNTTPVRMSVPFVQAQAVKQVVPKPINSTSQIVTTSQPQQRLIMPATPLPQIQPNLTNLPPGTVLAPAPGTGNVGYAVLPAQYVTQLQQSSYVSIAGNSNFTGTSGIQTQARVSFNGIIPSESASRPRKPCNCTKSLCLKLYCDCFANGEFCNNCNCTNCYNNLEHENERQKAIKACLDRNPEAFKPKIGKGKEGESDRRHSKGCNCKRSGCLKNYCECYEAKIMCSSICKCIGCKNFEESPERKTLMHLADAAEVRVQQQTAAKTKLSSQISDLLTRPTPALNSGGGKLPFTFVTKEVAEATCNCLLAQAEQADKKGKSKAAAERMILEEFGRCLMSVINSAGKAKSDPCAMHC.

Residue Lys-139 forms a Glycyl lysine isopeptide (Lys-Gly) (interchain with G-Cter in SUMO2) linkage. 2 positions are modified to N6-acetyllysine: Lys-244 and Lys-249. Phosphoserine is present on residues Ser-264, Ser-282, Ser-310, and Ser-314. A Glycyl lysine isopeptide (Lys-Gly) (interchain with G-Cter in SUMO2) cross-link involves residue Lys-357. The region spanning Pro-521 to Glu-634 is the CRC domain. Positions Lys-523–Tyr-536 are DNA-binding. Residues Cys-525, Cys-527, Cys-532, Cys-537, Cys-539, Cys-546, Cys-549, Cys-551, and Cys-554 each contribute to the Zn(2+) site. Residues Ile-583–Ser-596 form a linker region. Residues Cys-599, Cys-601, Cys-606, Cys-611, Cys-613, Cys-620, Cys-624, Cys-626, and Cys-629 each coordinate Zn(2+). The interval Cys-599–Glu-612 is DNA-binding. Ser-635 is subject to Phosphoserine. Residues Lys-639, Lys-659, and Lys-661 each participate in a glycyl lysine isopeptide (Lys-Gly) (interchain with G-Cter in SUMO2) cross-link.

This sequence belongs to the lin-54 family. In terms of assembly, component of the DREAM complex (also named LINC complex) at least composed of E2F4, E2F5, LIN9, LIN37, LIN52, LIN54, MYBL1, MYBL2, RBL1, RBL2, RBBP4, RBL2, TFDP1 and TFDP2. The complex exists in quiescent cells where it represses cell cycle-dependent genes. It dissociates in S phase when LIN9, LIN37, LIN52 and LIN54 form a subcomplex that binds to MYBL2.

The protein localises to the nucleus. Component of the DREAM complex, a multiprotein complex that can both act as a transcription activator or repressor depending on the context. In G0 phase, the complex binds to more than 800 promoters and is required for repression of E2F target genes. In S phase, the complex selectively binds to the promoters of G2/M genes whose products are required for mitosis and participates in their cell cycle dependent activation. In the complex, acts as a DNA-binding protein that binds the promoter of CDK1 in a sequence-specific manner. Specifically recognizes the consensus motif 5'-TTYRAA-3' in target DNA. The polypeptide is Protein lin-54 homolog (Lin54) (Rattus norvegicus (Rat)).